Reading from the N-terminus, the 236-residue chain is Small ribosomal subunit protein uS2c (236 aa).

The protein belongs to the universal ribosomal protein uS2 family.

The protein resides in the plastid. Its subcellular location is the chloroplast. This Lotus japonicus (Lotus corniculatus var. japonicus) protein is Small ribosomal subunit protein uS2c (rps2).